The sequence spans 358 residues: 3-dehydroquinate synthase (358 aa).

Residues 70–75, 104–108, 128–129, Lys141, Lys150, and 168–171 each bind NAD(+); these read DGEKFK, GVVGD, TT, and CLQT. 3 residues coordinate Zn(2+): Glu183, His246, and His263.

Belongs to the sugar phosphate cyclases superfamily. Dehydroquinate synthase family. It depends on Co(2+) as a cofactor. Zn(2+) is required as a cofactor. Requires NAD(+) as cofactor.

It is found in the cytoplasm. The catalysed reaction is 7-phospho-2-dehydro-3-deoxy-D-arabino-heptonate = 3-dehydroquinate + phosphate. The protein operates within metabolic intermediate biosynthesis; chorismate biosynthesis; chorismate from D-erythrose 4-phosphate and phosphoenolpyruvate: step 2/7. In terms of biological role, catalyzes the conversion of 3-deoxy-D-arabino-heptulosonate 7-phosphate (DAHP) to dehydroquinate (DHQ). This Shewanella frigidimarina (strain NCIMB 400) protein is 3-dehydroquinate synthase.